Reading from the N-terminus, the 761-residue chain is Complement factor B (761 aa).

A signal peptide spans 1 to 25 (MGIGHNPRLCLVPLILGLLCGGVGM). Sushi domains follow at residues 35–100 (SPCS…ECKA), 101–160 (IRCP…ICDD), and 163–220 (TYCP…SCQD). Intrachain disulfides connect C37–C76, C62–C98, C103–C145, C131–C158, C165–C205, and C191–C218. N-linked (GlcNAc...) asparagine glycans are attached at residues N122 and N142. A VWFA domain is found at 270 to 469 (NIYLVLDGSD…NLEDVFVQML (200 aa)). Mg(2+) contacts are provided by S278 and S280. Residue N285 is glycosylated (N-linked (GlcNAc...) asparagine). Residue T353 coordinates Mg(2+). A glycan (N-linked (GlcNAc...) asparagine) is linked at N378. The Peptidase S1 domain maps to 477 to 754 (LCGMVWEHKD…VLPWLKEKLQ (278 aa)). Disulfide bonds link C478-C596, C511-C527, C599-C615, C656-C682, and C695-C725. Residues H526 and D576 each act as charge relay system in the active site. Catalysis depends on S699, which acts as the Charge relay system.

This sequence belongs to the peptidase S1 family. In terms of assembly, monomer. Interacts with complement C3b; this interaction is dependent on the presence of Mg(2+). As to quaternary structure, catalytic component of the C3 convertase of the alternative complement pathway, also named C3bBb, composed of complement factor B Bb and complement C3b. Catalytic component of the C5 convertase of the alternative complement pathway, also named C3bBb3b, composed of complement factor B Bb and additional molecules of complement C3b. Interacts to CFP; this interaction contributes to the stabilization of the active C3-convertase enzyme complex. The cofactor is Mg(2+). Mn(2+) is required as a cofactor. Post-translationally, cleaved by CFD following activation of the alternative complement system, generating Ba and Bb chains. Cleavage and activation takes place when CFB is already associated with complement C3b.

It is found in the secreted. The protein localises to the cell surface. The catalysed reaction is Cleavage of Arg-|-Ser bond in complement component C3 alpha-chain to yield C3a and C3b, and Arg-|-Xaa bond in complement component C5 alpha-chain to yield C5a and C5b.. Precursor of the catalytic component of the C3 and C5 convertase complexes of the alternative pathway of the complement system, a cascade of proteins that leads to phagocytosis and breakdown of pathogens and signaling that strengthens the adaptive immune system. The alternative complement pathway acts as an amplification loop that enhances other complement pathways (classical, lectin and GZMK) by promoting formation of additional C3 and C5 convertases. CFB is cleaved and activated by CFD to generate Ba and Bb chains; Bb chain constituting the catalytic component of the C3 and C5 convertases. Functionally, serine protease component of the complement C3 and C5 convertase complexes of the alternative complement pathway. Following cleavage and activation by factor D (CFD), forms the C3 convertase together with complement C3b. As part of the C3 convertase, cleaves and activates C3 into C3a anaphylatoxin and C3b opsonin, the next components of the complement pathways. When an additional complement C3b molecule binds to the C3 convertase, forms the C5 convertase, which cleaves and activates C5 into C5a anaphylatoxin and C5b component of the membrane attack complex. Its function is as follows. Involved in proliferation and differentiation of preactivated B-lymphocytes, rapid spreading of peripheral blood monocytes, stimulation of lymphocyte blastogenesis and lysis of erythrocytes. This is Complement factor B (CFB) from Bos taurus (Bovine).